The primary structure comprises 715 residues: Probable phospholipase YOR022C, mitochondrial (715 aa).

A mitochondrion-targeting transit peptide spans 1-22; that stretch reads MLRFTHRGLPSSTRFRNIFVRL. 3 disordered regions span residues 161–180, 242–268, and 311–340; these read YPVD…NKDE, TSTS…SRSI, and YNNA…RQIR. Over residues 242–251 the composition is skewed to low complexity; it reads TSTSFKAAKT. A compositionally biased stretch (polar residues) spans 311 to 324; it reads YNNADNSQGANASS. The active site involves Ser501. A DDHD domain is found at 519–700; that stretch reads LEFQVDNLFF…AAFILKEILS (182 aa).

This sequence belongs to the PA-PLA1 family.

It localises to the mitochondrion. Functionally, probable phospholipase that hydrolyzes phosphatidic acid. The chain is Probable phospholipase YOR022C, mitochondrial from Saccharomyces cerevisiae (strain ATCC 204508 / S288c) (Baker's yeast).